A 504-amino-acid chain; its full sequence is Ectoine/proline transporter ProP (504 aa).

11 helical membrane-spanning segments follow: residues 41 to 61, 71 to 91, 118 to 138, 169 to 189, 207 to 227, 272 to 292, 309 to 329, 337 to 357, 362 to 382, 399 to 419, and 430 to 450; these read FMEWYDFGIYGYLTVTMTAVF, LLAVMFGFAVSYLVRPLGGLV, LIGLLPTAASIGAWALVLLYL, FFGAFLDMGSYLGFAAGASVV, DFGWRIPFLTAIPLGIIAVYL, LLIGIAIVAATNTAGYALTSY, AAVTVPILVVMSLLLPFVGMW, PVYATAVAATLILMVPAFLIM, IGAVLIALSMVAIPTGLYVAL, GMGISYNISVSLFGGTTPLIT, and IVPALYIMFFSAIAGVALLFM. The disordered stretch occupies residues 477-504; the sequence is NQDEDPNIDLSHMPFPDEENVGAEKQNA.

It belongs to the major facilitator superfamily.

The protein localises to the cell membrane. With respect to regulation, uptake is activated by osmotic stress. Inhibited by CCCP. Involved in the uptake of osmoprotectants. Can transport ectoine and proline. Protons are probably the coupling ions. The chain is Ectoine/proline transporter ProP from Corynebacterium glutamicum (strain ATCC 13032 / DSM 20300 / JCM 1318 / BCRC 11384 / CCUG 27702 / LMG 3730 / NBRC 12168 / NCIMB 10025 / NRRL B-2784 / 534).